Reading from the N-terminus, the 176-residue chain is Ribosome maturation factor RimM (176 aa).

The PRC barrel domain occupies 104-176; sequence EDEYYFYEIL…KIIAKEMEWI (73 aa).

Belongs to the RimM family. In terms of assembly, binds ribosomal protein uS19.

The protein resides in the cytoplasm. In terms of biological role, an accessory protein needed during the final step in the assembly of 30S ribosomal subunit, possibly for assembly of the head region. Essential for efficient processing of 16S rRNA. May be needed both before and after RbfA during the maturation of 16S rRNA. It has affinity for free ribosomal 30S subunits but not for 70S ribosomes. The sequence is that of Ribosome maturation factor RimM from Thermotoga maritima (strain ATCC 43589 / DSM 3109 / JCM 10099 / NBRC 100826 / MSB8).